The chain runs to 427 residues: MRIFEQLESQVRSYIRSFPVIFERSKGAYLYDEQGKAYIDFFAGAGTLNYGHNHPKIIEAMIAYLQNDGILHGLDKATSAKKAFLQTLSETILEPRHMDYKVQFTGPTGTNAIESALKLARMVKGRSNVIAFTNAFHGLTMGSMAVTGNAFYRDEAFVNRANVSFMPFDGYFGEEVDTSLYLRRFLEDGSSGVDLPAAIILETIQAEGGVNVARDEWLRSVEKVCRDFDILLIVDEIQVGNGRTGRFFSFEESGIRPDIITLSKSIGGGLPLALVLLRPELDQWKPGEHTGTFRGNNLAFVAAKEALEYWSDSVLGEWVKHNSAILKEGLEALVQAFPELGMSARGRGLIYGLEIPLSGMAKEVSANCFQKGLVIELAGASDTVLKFLPPLIIEEETLREGLGIIKEAIGEVLREREARMGEVFGDR.

Lysine 264 carries the post-translational modification N6-(pyridoxal phosphate)lysine.

The protein belongs to the class-III pyridoxal-phosphate-dependent aminotransferase family. It depends on pyridoxal 5'-phosphate as a cofactor.

The enzyme catalyses L-2,4-diaminobutanoate + 2-oxoglutarate = L-aspartate 4-semialdehyde + L-glutamate. The protein operates within amine and polyamine biosynthesis; ectoine biosynthesis; L-ectoine from L-aspartate 4-semialdehyde: step 1/3. Its function is as follows. Catalyzes reversively the conversion of L-aspartate beta-semialdehyde (ASA) to L-2,4-diaminobutyrate (DABA) by transamination with L-glutamate. This Wolinella succinogenes (strain ATCC 29543 / DSM 1740 / CCUG 13145 / JCM 31913 / LMG 7466 / NCTC 11488 / FDC 602W) (Vibrio succinogenes) protein is Diaminobutyrate--2-oxoglutarate transaminase (ectB).